A 185-amino-acid chain; its full sequence is Ovomucoid (185 aa).

Kazal-like domains follow at residues 1–63 (VEVD…ECRE), 64–128 (AVPM…ECRK), and 131–185 (AAVS…FGKC). 9 disulfides stabilise this stretch: C5/C43, C22/C40, C30/C61, C69/C108, C86/C105, C94/C126, C137/C167, C145/C164, and C153/C185. N-linked (GlcNAc...) asparagine glycosylation occurs at N174.

Its subcellular location is the secreted. In Meleagris gallopavo (Wild turkey), this protein is Ovomucoid.